The chain runs to 584 residues: uncharacterized protein (584 aa).

This is an uncharacterized protein from Magallana gigas (Pacific oyster).